We begin with the raw amino-acid sequence, 545 residues long: 4-coumarate--CoA ligase 1 (545 aa).

Residues S192, S193, G194, T195, T196, and K200 each contribute to the ATP site. Residues Y242 and S246 each coordinate (E)-4-coumaroyl-AMP. K263 serves as a coordination point for CoA. An SBD1 region spans residues 265-334; it reads DIAQFLELIP…AKFPNAKLGQ (70 aa). Positions 312, 334, 335, 339, and 347 each coordinate (E)-4-coumaroyl-AMP. ATP-binding residues include Q334, G335, and T339. Positions 335–402 are SBD2; sequence GYGMTEAGPV…IRGDQIMKGY (68 aa). 2 residues coordinate ATP: D423 and R438. The (E)-4-coumaroyl-AMP site is built by K440 and K444. Residues K446 and G447 each contribute to the CoA site. Position 529 (K529) interacts with ATP.

It belongs to the ATP-dependent AMP-binding enzyme family. Mg(2+) serves as cofactor.

It catalyses the reaction (E)-4-coumarate + ATP + CoA = (E)-4-coumaroyl-CoA + AMP + diphosphate. The catalysed reaction is (E)-4-coumarate + ATP + H(+) = (E)-4-coumaroyl-AMP + diphosphate. The enzyme catalyses (E)-4-coumaroyl-AMP + CoA = (E)-4-coumaroyl-CoA + AMP + H(+). It functions in the pathway phytoalexin biosynthesis; 3,4',5-trihydroxystilbene biosynthesis; 3,4',5-trihydroxystilbene from trans-4-coumarate: step 1/2. Its function is as follows. Carboxylate--CoA ligase that may use 4-coumarate as substrate. Follows a two-step reaction mechanism, wherein the carboxylate substrate first undergoes adenylation by ATP, followed by a thioesterification in the presence of CoA to yield the final CoA thioester. This is 4-coumarate--CoA ligase 1 (4CL1) from Solanum tuberosum (Potato).